The primary structure comprises 440 residues: Cobyrinate a,c-diamide synthase (440 aa).

Residues arginine 247–arginine 428 enclose the GATase cobBQ-type domain. Cysteine 329 serves as the catalytic Nucleophile.

It belongs to the CobB/CbiA family. Mg(2+) is required as a cofactor.

It carries out the reaction cob(II)yrinate + 2 L-glutamine + 2 ATP + 2 H2O = cob(II)yrinate a,c diamide + 2 L-glutamate + 2 ADP + 2 phosphate + 2 H(+). Its pathway is cofactor biosynthesis; adenosylcobalamin biosynthesis; cob(II)yrinate a,c-diamide from sirohydrochlorin (anaerobic route): step 10/10. Catalyzes the ATP-dependent amidation of the two carboxylate groups at positions a and c of cobyrinate, using either L-glutamine or ammonia as the nitrogen source. This is Cobyrinate a,c-diamide synthase from Picrophilus torridus (strain ATCC 700027 / DSM 9790 / JCM 10055 / NBRC 100828 / KAW 2/3).